Here is a 479-residue protein sequence, read N- to C-terminus: Aspartyl/glutamyl-tRNA(Asn/Gln) amidotransferase subunit B (479 aa).

Belongs to the GatB/GatE family. GatB subfamily. As to quaternary structure, heterotrimer of A, B and C subunits.

It catalyses the reaction L-glutamyl-tRNA(Gln) + L-glutamine + ATP + H2O = L-glutaminyl-tRNA(Gln) + L-glutamate + ADP + phosphate + H(+). The catalysed reaction is L-aspartyl-tRNA(Asn) + L-glutamine + ATP + H2O = L-asparaginyl-tRNA(Asn) + L-glutamate + ADP + phosphate + 2 H(+). In terms of biological role, allows the formation of correctly charged Asn-tRNA(Asn) or Gln-tRNA(Gln) through the transamidation of misacylated Asp-tRNA(Asn) or Glu-tRNA(Gln) in organisms which lack either or both of asparaginyl-tRNA or glutaminyl-tRNA synthetases. The reaction takes place in the presence of glutamine and ATP through an activated phospho-Asp-tRNA(Asn) or phospho-Glu-tRNA(Gln). The sequence is that of Aspartyl/glutamyl-tRNA(Asn/Gln) amidotransferase subunit B from Geobacter sulfurreducens (strain ATCC 51573 / DSM 12127 / PCA).